The sequence spans 131 residues: Fumarate reductase subunit C (131 aa).

The next 3 helical transmembrane spans lie at 30–50 (EGTA…LFAL), 61–81 (IGFL…AAAL), and 110–130 (IKGL…VALF).

It belongs to the FrdC family. Part of an enzyme complex containing four subunits: a flavoprotein (FrdA), an iron-sulfur protein (FrdB), and two hydrophobic anchor proteins (FrdC and FrdD).

The protein localises to the cell inner membrane. Two distinct, membrane-bound, FAD-containing enzymes are responsible for the catalysis of fumarate and succinate interconversion; fumarate reductase is used in anaerobic growth, and succinate dehydrogenase is used in aerobic growth. Anchors the catalytic components of the fumarate reductase complex to the cell inner membrane, binds quinones. The protein is Fumarate reductase subunit C of Klebsiella pneumoniae (strain 342).